Reading from the N-terminus, the 910-residue chain is 2-oxoglutarate dehydrogenase E1 component (910 aa).

This sequence belongs to the alpha-ketoglutarate dehydrogenase family. In terms of assembly, homodimer. Part of the 2-oxoglutarate dehydrogenase (OGDH) complex composed of E1 (2-oxoglutarate dehydrogenase), E2 (dihydrolipoamide succinyltransferase) and E3 (dihydrolipoamide dehydrogenase); the complex contains multiple copies of the three enzymatic components (E1, E2 and E3). The cofactor is thiamine diphosphate.

It catalyses the reaction N(6)-[(R)-lipoyl]-L-lysyl-[protein] + 2-oxoglutarate + H(+) = N(6)-[(R)-S(8)-succinyldihydrolipoyl]-L-lysyl-[protein] + CO2. Functionally, E1 component of the 2-oxoglutarate dehydrogenase (OGDH) complex which catalyzes the decarboxylation of 2-oxoglutarate, the first step in the conversion of 2-oxoglutarate to succinyl-CoA and CO(2). This is 2-oxoglutarate dehydrogenase E1 component from Staphylococcus aureus (strain N315).